We begin with the raw amino-acid sequence, 174 residues long: NAD(P)H-quinone oxidoreductase subunit J (174 aa).

It belongs to the complex I 30 kDa subunit family. As to quaternary structure, NDH-1 can be composed of about 15 different subunits; different subcomplexes with different compositions have been identified which probably have different functions.

The protein resides in the cellular thylakoid membrane. The catalysed reaction is a plastoquinone + NADH + (n+1) H(+)(in) = a plastoquinol + NAD(+) + n H(+)(out). It catalyses the reaction a plastoquinone + NADPH + (n+1) H(+)(in) = a plastoquinol + NADP(+) + n H(+)(out). Functionally, NDH-1 shuttles electrons from an unknown electron donor, via FMN and iron-sulfur (Fe-S) centers, to quinones in the respiratory and/or the photosynthetic chain. The immediate electron acceptor for the enzyme in this species is believed to be plastoquinone. Couples the redox reaction to proton translocation, and thus conserves the redox energy in a proton gradient. Cyanobacterial NDH-1 also plays a role in inorganic carbon-concentration. In Picosynechococcus sp. (strain ATCC 27264 / PCC 7002 / PR-6) (Agmenellum quadruplicatum), this protein is NAD(P)H-quinone oxidoreductase subunit J.